A 321-amino-acid polypeptide reads, in one-letter code: Lipoyl synthase (321 aa).

7 residues coordinate [4Fe-4S] cluster: Cys68, Cys73, Cys79, Cys94, Cys98, Cys101, and Ser308. The region spanning 80–297 (FNHGTATFMI…KVLADELGFT (218 aa)) is the Radical SAM core domain.

This sequence belongs to the radical SAM superfamily. Lipoyl synthase family. It depends on [4Fe-4S] cluster as a cofactor.

Its subcellular location is the cytoplasm. The catalysed reaction is [[Fe-S] cluster scaffold protein carrying a second [4Fe-4S](2+) cluster] + N(6)-octanoyl-L-lysyl-[protein] + 2 oxidized [2Fe-2S]-[ferredoxin] + 2 S-adenosyl-L-methionine + 4 H(+) = [[Fe-S] cluster scaffold protein] + N(6)-[(R)-dihydrolipoyl]-L-lysyl-[protein] + 4 Fe(3+) + 2 hydrogen sulfide + 2 5'-deoxyadenosine + 2 L-methionine + 2 reduced [2Fe-2S]-[ferredoxin]. It participates in protein modification; protein lipoylation via endogenous pathway; protein N(6)-(lipoyl)lysine from octanoyl-[acyl-carrier-protein]: step 2/2. Functionally, catalyzes the radical-mediated insertion of two sulfur atoms into the C-6 and C-8 positions of the octanoyl moiety bound to the lipoyl domains of lipoate-dependent enzymes, thereby converting the octanoylated domains into lipoylated derivatives. The polypeptide is Lipoyl synthase (Shewanella sp. (strain ANA-3)).